A 659-amino-acid polypeptide reads, in one-letter code: MAAFSKYLTARNTSLAGAAFLLLCLLHKRRRALGLHGKKSGKPPLQNNEKEGKKERAVVDKVFLSRLSQILKIMVPRTFCKETGYLLLIAVMLVSRTYCDVWMIQNGTLIESGIIGRSSKDFKRYLFNFIAAMPLISLVNNFLKYGLNELKLCFRVRLTRYLYEEYLQAFTYYKMGNLDNRIANPDQLLTQDVEKFCNSVVDLYSNLSKPFLDIVLYIFKLTSAIGAQGPASMMAYLLVSGLFLTRLRRPIGKMTIMEQKYEGEYRYVNSRLITNSEEIAFYNGNKREKQTIHSVFRKLVEHLHNFIFFRFSMGFIDSIIAKYVATVVGYLVVSRPFLDLAHPRHLHSTHSELLEDYYQSGRMLLRMSQALGRIVLAGREMTRLAGFTARITELMQVLKDLNHGRYERTMVSQQEKGIEGAQASPLVPGAGEIINTDNIIKFDHVPLATPNGDILIQDLSFEVRSGANVLICGPNGCGKSSLFRVLGELWPLFGGRLTKPERGKLFYVPQRPYMTLGTLRDQVIYPDGKEDQKKRGISDQVLKEYLDNVQLGHILEREGGWDSVQDWMDVLSGGEKQRMAMARLFYHKPQFAILDECTSAVSVDVEDYIYSHCRKVGITLFTVSHRKSLWKHHEYYLHMDGRGNYEFKKITEDTVEFGS.

The interaction with PEX19 stretch occupies residues 1–61 (MAAFSKYLTA…GKKERAVVDK (61 aa)). Asparagine 12 carries N-linked (GlcNAc...) asparagine glycosylation. Residue lysine 61 is modified to N6-acetyllysine. The chain crosses the membrane as a helical span at residues 84 to 104 (GYLLLIAVMLVSRTYCDVWMI). Residues 85-372 (YLLLIAVMLV…MLLRMSQALG (288 aa)) enclose the ABC transmembrane type-1 domain. Asparagine 106 is a glycosylation site (N-linked (GlcNAc...) asparagine). A helical transmembrane segment spans residues 126 to 146 (LFNFIAAMPLISLVNNFLKYG). Asparagine 206 is a glycosylation site (N-linked (GlcNAc...) asparagine). A helical transmembrane segment spans residues 224–244 (AIGAQGPASMMAYLLVSGLFL). Lysine 260 is subject to N6-acetyllysine. Residues 313 to 333 (MGFIDSIIAKYVATVVGYLVV) form a helical membrane-spanning segment. The residue at position 399 (lysine 399) is an N6-acetyllysine. Serine 424 is subject to Phosphoserine. The ABC transporter domain occupies 434–659 (INTDNIIKFD…ITEDTVEFGS (226 aa)). 473 to 480 (GPNGCGKS) serves as a coordination point for ATP. Lysine 533 is modified (N6-acetyllysine). Serine 659 carries the post-translational modification Phosphoserine.

The protein belongs to the ABC transporter superfamily. ABCD family. Peroxisomal fatty acyl CoA transporter (TC 3.A.1.203) subfamily. In terms of assembly, homodimers. Can form heterodimers with ABCD1 and ABCD2. Dimerization is necessary to form an active transporter. Interacts with PEX19; mediates the targeting of ABCD3 to peroxisomes. In terms of processing, ubiquitinated by PEX2 during pexophagy in response to starvation, leading to its degradation.

The protein localises to the peroxisome membrane. It carries out the reaction a very long-chain fatty acyl-CoA + H2O = a very long-chain fatty acid + CoA + H(+). The catalysed reaction is a very long-chain fatty acid(in) + ATP + H2O = a very long-chain fatty acid(out) + ADP + phosphate + H(+). It catalyses the reaction a long-chain fatty acyl-CoA + H2O = a long-chain fatty acid + CoA + H(+). The enzyme catalyses a long-chain fatty acid(in) + ATP + H2O = a long-chain fatty acid(out) + ADP + phosphate + H(+). It carries out the reaction pristanoyl-CoA + H2O = 2,6,10,14-tetramethylpentadecanoate + CoA + H(+). The catalysed reaction is 2,6,10,14-tetramethylpentadecanoate(in) + ATP + H2O = 2,6,10,14-tetramethylpentadecanoate(out) + ADP + phosphate + H(+). It catalyses the reaction hexadecanedioyl-CoA + H2O = hexadecanedioate + CoA + H(+). The enzyme catalyses hexadecanedioate(in) + ATP + H2O = hexadecanedioate(out) + ADP + phosphate + H(+). It carries out the reaction (5Z,8Z,11Z,14Z,17Z)-eicosapentaenoyl-CoA + H2O = (5Z,8Z,11Z,14Z,17Z)-eicosapentaenoate + CoA + H(+). The catalysed reaction is (5Z,8Z,11Z,14Z,17Z)-eicosapentaenoate(in) + ATP + H2O = (5Z,8Z,11Z,14Z,17Z)-eicosapentaenoate(out) + ADP + phosphate + H(+). It catalyses the reaction (4Z,7Z,10Z,13Z,16Z,19Z)-docosahexaenoyl-CoA + H2O = (4Z,7Z,10Z,13Z,16Z,19Z)-docosahexaenoate + CoA + H(+). The enzyme catalyses (4Z,7Z,10Z,13Z,16Z,19Z)-docosahexaenoate(in) + ATP + H2O = (4Z,7Z,10Z,13Z,16Z,19Z)-docosahexaenoate(out) + ADP + phosphate + H(+). Functionally, broad substrate specificity ATP-dependent transporter of the ATP-binding cassette (ABC) family that catalyzes the transport of long-chain fatty acids (LCFA)-CoA, dicarboxylic acids-CoA, long-branched-chain fatty acids-CoA and bile acids from the cytosol to the peroxisome lumen for beta-oxydation. Has fatty acyl-CoA thioesterase and ATPase activities. Probably hydrolyzes fatty acyl-CoAs into free fatty acids prior to their ATP-dependent transport into peroxisomes. Thus, play a role in regulation of LCFAs and energy metabolism namely, in the degradation and biosynthesis of fatty acids by beta-oxidation. This chain is ATP-binding cassette sub-family D member 3 (Abcd3), found in Mus musculus (Mouse).